Reading from the N-terminus, the 156-residue chain is Small ribosomal subunit protein uS7 (156 aa).

The protein belongs to the universal ribosomal protein uS7 family. Part of the 30S ribosomal subunit. Contacts proteins S9 and S11.

Its function is as follows. One of the primary rRNA binding proteins, it binds directly to 16S rRNA where it nucleates assembly of the head domain of the 30S subunit. Is located at the subunit interface close to the decoding center, probably blocks exit of the E-site tRNA. This Corynebacterium jeikeium (strain K411) protein is Small ribosomal subunit protein uS7.